The following is a 105-amino-acid chain: MRTFALFIATALAEIVGCYLPYLWLKQGRSAWLLVPAAASLALFAWLLTLHETAAGRVYAAYGGVYIGVALLWLWIVDGIRPTAWDVAGVAVALTGMGLIMFQPR.

A run of 4 helical transmembrane segments spans residues 4 to 24 (FALFIATALAEIVGCYLPYLW), 30 to 50 (SAWLLVPAAASLALFAWLLTL), 60 to 80 (AAYGGVYIGVALLWLWIVDGI), and 82 to 102 (PTAWDVAGVAVALTGMGLIMF).

This sequence belongs to the UPF0060 family.

It is found in the cell inner membrane. This Acidovorax sp. (strain JS42) protein is UPF0060 membrane protein Ajs_1326.